A 488-amino-acid chain; its full sequence is Protein kinase C and casein kinase substrate in neurons 2 protein (488 aa).

Residues 11-282 (VEVSSDSFWE…SIKAADAVED (272 aa)) form the F-BAR domain. The stretch at 25–274 (KRTVKRIDDG…GIYRELEQSI (250 aa)) forms a coiled coil. K53 is subject to N6-acetyllysine. Basic and acidic residues predominate over residues 163–176 (CKEEKLAVSREANS). The segment at 163 to 183 (CKEEKLAVSREANSKADPSLN) is disordered. Phosphoserine is present on S273. S315 carries the post-translational modification Phosphoserine; by PKC. Residues 316-429 (RREKKKAADG…PFDEDTTSGT (114 aa)) form a disordered region. Polar residues predominate over residues 329-364 (TGINQTGDQSGQNKPSSNLSVPSNPAQSTQLQSSYN). The NPF1 motif lies at 364-366 (NPF). S375 is modified (phosphoserine; by IKKB). Positions 386-396 (NVSSYEKTQNY) are enriched in polar residues. S401 is subject to Phosphoserine. A compositionally biased stretch (polar residues) spans 406–418 (NNPFSSTDANGDS). An NPF2 motif is present at residues 407–409 (NPF). An NPF3 motif is present at residues 419–421 (NPF). Positions 428–488 (GTEVRVRALY…YPANYVEAIQ (61 aa)) constitute an SH3 domain. A Phosphoserine modification is found at S448.

It belongs to the PACSIN family. As to quaternary structure, homodimer. May form heterooligomers with other PACSINs. Interacts (via NPF motifs) with EHD1 (via EH domain). Interacts with EHD3. Interacts (via the SH3 domain) with MICALL1. Interacts with RAC1. Interacts (via SH3 domain) with DNM1, SYN1, SYNJ1 and WASL. Interacts with CAV1. Interacts with TRPV4. Forms a complex with EHD4 and MICALL1; the complex controls CDH5 trafficking and coordinates angiogenesis. In terms of processing, phosphorylated by casein kinase 2 (CK2) and protein kinase C (PKC). Phosphorylation by PKC probably decreases the membrane binding and tubulation capacities of PACSIN2, thereby modulating the lifetime of caveolae. Widely expressed (at protein level). Isoforms 1/3 are predominantly expressed in heart and in PC-12 cells, a pheochromocytoma cell line (at protein level). Isoforms 2/4 are widely expressed with highest levels in muscle, testis and brain (at protein level).

It localises to the cytoplasm. It is found in the cytoskeleton. The protein resides in the cytoplasmic vesicle membrane. Its subcellular location is the cell projection. The protein localises to the ruffle membrane. It localises to the early endosome. It is found in the recycling endosome membrane. The protein resides in the cell membrane. Its subcellular location is the membrane. The protein localises to the caveola. It localises to the cell junction. It is found in the adherens junction. Functionally, regulates the morphogenesis and endocytosis of caveolae. Lipid-binding protein that is able to promote the tubulation of the phosphatidic acid-containing membranes it preferentially binds. Plays a role in intracellular vesicle-mediated transport. Involved in the endocytosis of cell-surface receptors like the EGF receptor, contributing to its internalization in the absence of EGF stimulus. Facilitates endothelial front-rear polarity during migration by recruiting EHD4 and MICALL1 to asymmetric adherens junctions between leader and follower cells. The protein is Protein kinase C and casein kinase substrate in neurons 2 protein (Pacsin2) of Rattus norvegicus (Rat).